The primary structure comprises 486 residues: Cardiolipin synthase A (486 aa).

2 consecutive transmembrane segments (helical) span residues 3 to 23 (IFYN…IANI) and 38 to 58 (MSWL…WFFF). PLD phosphodiesterase domains are found at residues 219-246 (VDVR…VDPY) and 399-426 (QKGL…DMRS). Residues His-224, Lys-226, Asp-231, His-404, Lys-406, and Asp-411 contribute to the active site.

Belongs to the phospholipase D family. Cardiolipin synthase subfamily. ClsA sub-subfamily.

The protein localises to the cell inner membrane. It carries out the reaction 2 a 1,2-diacyl-sn-glycero-3-phospho-(1'-sn-glycerol) = a cardiolipin + glycerol. Functionally, catalyzes the reversible phosphatidyl group transfer from one phosphatidylglycerol molecule to another to form cardiolipin (CL) (diphosphatidylglycerol) and glycerol. This Buchnera aphidicola subsp. Acyrthosiphon pisum (strain 5A) protein is Cardiolipin synthase A.